A 140-amino-acid chain; its full sequence is Putative esterase MT1895 (140 aa).

The protein belongs to the thioesterase PaaI family.

The sequence is that of Putative esterase MT1895 from Mycobacterium tuberculosis (strain CDC 1551 / Oshkosh).